A 63-amino-acid chain; its full sequence is Small ribosomal subunit protein bS21 (63 aa).

Basic and acidic residues predominate over residues 40 to 52 (KPSVKRKLKSEAA). A disordered region spans residues 40–63 (KPSVKRKLKSEAARKRKNKRGRRY). Residues 53–63 (RKRKNKRGRRY) show a composition bias toward basic residues.

This sequence belongs to the bacterial ribosomal protein bS21 family.

The polypeptide is Small ribosomal subunit protein bS21 (Limosilactobacillus reuteri (strain DSM 20016) (Lactobacillus reuteri)).